The following is a 341-amino-acid chain: HTH-type transcriptional repressor PurR (341 aa).

An HTH lacI-type domain is found at Ala2–Val56. A DNA-binding region (H-T-H motif) is located at residues Ile4–Asn23. Residues Ser48–Val56 mediate DNA binding. The hypoxanthine site is built by Tyr73, Arg190, Thr192, Phe221, and Asp275.

As to quaternary structure, homodimer.

Its pathway is purine metabolism; purine nucleotide biosynthesis [regulation]. In terms of biological role, is the main repressor of the genes involved in the de novo synthesis of purine nucleotides, regulating purB, purC, purEK, purF, purHD, purL, purMN and guaBA expression. In addition, it participates in the regulation or coregulation of genes involved in de novo pyrimidine nucleotide biosynthesis, salvage and uptake (pyrC, pyrD, carAB and codBA), and of several genes encoding enzymes necessary for nucleotide and polyamine biosynthesis (prsA, glyA, gcvTHP, speA, glnB). Binds to a 16-bp palindromic sequence located within the promoter region of pur regulon genes. The consensus binding sequence is 5'-ACGCAAACGTTTTCNT-3'. PurR is allosterically activated to bind its cognate DNA by binding the purine corepressors, hypoxanthine or guanine, thereby effecting transcription repression. In Escherichia coli (strain K12), this protein is HTH-type transcriptional repressor PurR (purR).